The sequence spans 312 residues: Deoxyribonuclease Tat-D (312 aa).

Residues glutamate 124, histidine 161, histidine 187, and aspartate 235 each contribute to the a divalent metal cation site.

The protein belongs to the metallo-dependent hydrolases superfamily. TatD-type hydrolase family. A divalent metal cation serves as cofactor.

It is found in the cytoplasm. The protein resides in the nucleus. Functionally, has both endo- and exonuclease activities. Incises double-stranded DNA without obvious specificity via its endonuclease activity and excises the DNA from the 3'-to 5'-end by its exonuclease activity. May have a role in apoptosis. This Schizosaccharomyces pombe (strain 972 / ATCC 24843) (Fission yeast) protein is Deoxyribonuclease Tat-D.